We begin with the raw amino-acid sequence, 1784 residues long: Protein mel-28 (1784 aa).

A required for nuclear envelope and kinetochore localization region spans residues 1–956 (MDNENSSIFK…QNDDEDMPEV (956 aa)). The required for association with mitotic chromosomes stretch occupies residues 566-778 (GKIEEFCQLA…TSPEDSEHSE (213 aa)). Residues 846 to 1071 (APMTVTIGKH…HNSILKTAKG (226 aa)) are important for nuclear localization. Disordered stretches follow at residues 945–994 (KVQN…AKRI) and 1115–1784 (ETMT…RAKQ). Residues 1126–1149 (GKHDEEKDSEKNVVDEMEEVKDQE) show a composition bias toward basic and acidic residues. 2 stretches are compositionally biased toward acidic residues: residues 1222–1232 (LEEEGEDEDIW) and 1266–1278 (VNEE…EEVQ). Residues 1239 to 1601 (FEVQMDEDCE…TTVDPSSSAL (363 aa)) form a chromatin binding region. The segment covering 1279–1293 (QDAKEPEKTEKRQEE) has biased composition (basic and acidic residues). A compositionally biased stretch (low complexity) spans 1297 to 1306 (EVMQPVIPEE). The segment covering 1321–1336 (ELQEEPDIVPTGDEDT) has biased composition (acidic residues). Residues 1337–1351 (ADKVQEQAVEEDRPP) are compositionally biased toward basic and acidic residues. Polar residues predominate over residues 1352–1366 (SRNTRSSSVQKSTSQ). A compositionally biased stretch (basic and acidic residues) spans 1367–1382 (VEDRDPKELVEEERPP). Residues 1383–1398 (SRNTRSASVQKSSNQE) show a composition bias toward polar residues. Residues 1428-1444 (KVKDQKPEELIEEDRPP) show a composition bias toward basic and acidic residues. Polar residues predominate over residues 1445–1459 (SRNTRSASAQKTVAA). Residues 1533-1546 (AAASTSSSRAGSVT) show a composition bias toward low complexity. Residues 1566 to 1576 (VQEEEEEEAEE) show a composition bias toward acidic residues. The segment covering 1581-1606 (SRSTRSASVKNTTVDPSSSALASTKR) has biased composition (polar residues). The important for nuclear localization stretch occupies residues 1601-1784 (LASTKRTTSR…LLRSARRAKQ (184 aa)). A DNA-binding region (a.T hook 1) is located at residues 1630 to 1642 (TPKRGRPAKKDAG). Residues 1630 to 1784 (TPKRGRPAKK…LLRSARRAKQ (155 aa)) form a required for chromosome segregation, nuclear growth, nucleoplasmic accumulation and cell cycle timing, but not required for nuclear envelope and kinetochore localization region. Positions 1716–1735 (AGTSKQSRSVTRSRASSIDV) are enriched in polar residues. The a.T hook 2 DNA-binding region spans 1746–1758 (KRGRGRPPKTVLE).

In terms of tissue distribution, ubiquitously expressed (at protein level).

It localises to the nucleus. Its subcellular location is the nucleoplasm. It is found in the nucleus envelope. The protein localises to the nucleus inner membrane. The protein resides in the nuclear pore complex. It localises to the chromosome. Its subcellular location is the centromere. It is found in the kinetochore. Nuclear envelope protein which has essential roles in assembly of nuclear pore complexes and in chromatin maintenance during the cell cycle. Appears to be a stable structural component of the nuclear envelope during interphase. In dividing cells, localizes to kinetochores during early stages of mitosis and then to chromatin during late mitosis. Important for several mitotic processes including chromosome condensation, kinetochore assembly, chromosome segregation and cell-cycle timing. In postmitotic cells, plays a role in the early steps of nuclear pore complex assembly by recruiting the nucleoporins npp-10 and npp-5 to chromatin. Also involved in meiotic chromosome segregation. May function downstream of the Ran GTPase signaling pathway. This chain is Protein mel-28, found in Caenorhabditis elegans.